The sequence spans 393 residues: S-adenosylmethionine synthase 2 (393 aa).

Glutamate 9 is a binding site for Mg(2+). Residue histidine 15 participates in ATP binding. Glutamate 43 contributes to the K(+) binding site. L-methionine is bound by residues glutamate 56 and glutamine 99. ATP-binding positions include 167 to 169 (DGK), 235 to 238 (SGRF), aspartate 246, 252 to 253 (RK), alanine 269, lysine 273, and lysine 277. Aspartate 246 lines the L-methionine pocket. Lysine 277 serves as a coordination point for L-methionine.

Belongs to the AdoMet synthase family. Homotetramer. Mn(2+) serves as cofactor. It depends on Mg(2+) as a cofactor. Requires Co(2+) as cofactor. K(+) is required as a cofactor. Mostly expressed in roots. Also present in stems and leaves.

Its subcellular location is the cytoplasm. The catalysed reaction is L-methionine + ATP + H2O = S-adenosyl-L-methionine + phosphate + diphosphate. It functions in the pathway amino-acid biosynthesis; S-adenosyl-L-methionine biosynthesis; S-adenosyl-L-methionine from L-methionine: step 1/1. In terms of biological role, catalyzes the formation of S-adenosylmethionine from methionine and ATP. The reaction comprises two steps that are both catalyzed by the same enzyme: formation of S-adenosylmethionine (AdoMet) and triphosphate, and subsequent hydrolysis of the triphosphate. This Solanum lycopersicum (Tomato) protein is S-adenosylmethionine synthase 2 (SAM2).